The chain runs to 181 residues: MWLTVKLLLGRRCLLQVSENEKVFMLKRLVSKQLHVPEKQQRLLFRGQVLADNKRLSDYCIGPNSTLNVIIRPLEKTSPETPSQPRSQSLWPQLNQILLKHFSPQDAENVLRRLREDHRKSLQRMNLDDLERISKVLVPEGKHSGATGSTRESKGDMEPRRNMKCNLAHKDGFKREKSPGK.

The Ubiquitin-like domain occupies 1 to 76 (MWLTVKLLLG…LNVIIRPLEK (76 aa)). Residues 139 to 181 (PEGKHSGATGSTRESKGDMEPRRNMKCNLAHKDGFKREKSPGK) form a disordered region. Basic and acidic residues-rich tracts occupy residues 151-161 (RESKGDMEPRR) and 168-181 (AHKD…SPGK).

It localises to the cytoplasm. The chain is Ubiquitin-like protein 4B (UBL4B) from Monodelphis domestica (Gray short-tailed opossum).